Consider the following 1390-residue polypeptide: MSYSFTEKKRIRKSFAKRASVLDVPFLLATQIDSYTEFLQLGTPLDERKDVGLQAAFKSIFPIVSHNGYARLDFAHYVLGEPPFDVQECQLRGITFAAPLRARIRLTIFDKESSKPVVKEVRENEVYMGEIPLMTANGSFIINGTERVIVSQLHRSPGVFFEHDRGKTHSSGKLLFSARVIPYRGSWLDFEFDPKDLLYFRIDRRRKMPVTILLKALGYTNEEILSEFYSFDTFYLTKSGVFMRVVPERLKGEVAKFDIVAADGKLIVAKDKRITAKHIRDIQTAELDRIEVPADALLGKMLAHNVVNQNTGEVIARANEEVTEEILAKLALAEVEQVEVLFTNDLDQGAYISQTLRTDDIQDQTQARVAIYRMMRPGEPPTEDAVEALFQRLFFSDETYDLSRVGRMKFSSRTYQYKFDDKTPEWFKTLIGEKFASRRDVMEGTLATEDIVSVIAILTELRNGRGEVDDIDHLGNRRVRSVGELAENQFRAGLVRVERAVKERLNQAESDNLMPHDLINAKPVSAAIKEFFGSSQLSQFMDQTNPLSEITHKRRVSALGPGGLTRERAGFEVRDVHPTHYGRVCPIETPEGPNIGLINSLSVYARTNEFGFLETPYRKVVDGKVTNEIDYLSAIEEGRYVIAQANAELDGEGALIDELVTCREKGETILATPDRVQYMDVATGQVVSVAASLIPFLEHDDANRALMGANMQRQAVPCLRPEKAFVGTGIERSVAVDSGTTVVARRGGVVDYVDAGRVVVRVNDEEATAGEVGVDIYNLTKFTRSNQNTNINQRPVVKVGDHIARGDVVADGASTDLGELALGQNMTIAFMPWNGYNYEDSILISEKLVAEDRYTSIHIEELSVVARDTKLGPEEITRDIPNLSERMAGRLDESGIVYIGAEVEAGDVLVGKVTPKGETQLTPEEKLLRAIFGEKASDVKDTSLRVPTGTVGTVIDVQVFTREGIERDKRAQSIIDAELKRYRLDLNDQLRIFDNDAFSRIERLIVGKAANGGPKRLAKGTVIDQEYLAGLPTKHDWFDIRMADEDIAKQLELIKESLAQKREEFDLKFEDKKRKLTQGDELPPGVQKMVKVYLAVKRRLQAGDKMAGRHGNKGVVSRILPVEDMPYMGDGRPVDIVLNPLGVPSRMNIGQILEVHLGWAAKGIGERINRMVREQSAAEIRAYLERIYNETGKPEEIAALSDAEVMQLAQNLSKGMTFATPVFDGAKEAEIKHMLDLAYPDGDELTEKMGFNESKTQMTLFDGRSGEAFDRKVTVGVMHYLKLHHLVDDKMHARSTGPYSLVTQQPLGGKAQFGGQRFGEMEVWALEAYGAAYTLQEMLTVKSDDVTGRTKVYENIVKGEHKIDAGMPESFNVLVKEIRSLGLDMDLERY.

It belongs to the RNA polymerase beta chain family. The RNAP catalytic core consists of 2 alpha, 1 beta, 1 beta' and 1 omega subunit. When a sigma factor is associated with the core the holoenzyme is formed, which can initiate transcription.

It catalyses the reaction RNA(n) + a ribonucleoside 5'-triphosphate = RNA(n+1) + diphosphate. Functionally, DNA-dependent RNA polymerase catalyzes the transcription of DNA into RNA using the four ribonucleoside triphosphates as substrates. This chain is DNA-directed RNA polymerase subunit beta, found in Chromobacterium violaceum (strain ATCC 12472 / DSM 30191 / JCM 1249 / CCUG 213 / NBRC 12614 / NCIMB 9131 / NCTC 9757 / MK).